Reading from the N-terminus, the 718-residue chain is MSVSGKKEFDVKQILRLRWRWFSHPFQGSTNTGSCLQQEGYEHRGTPVQGRLKSHSRDRNGLKKSNSPVHHNILAPVPGPAPAHQRAVQNLQQHNLIVHFQANEDTPKSVPEKNLFKEACEKRAQDLEMMADDNIEDSTARLDTQHSEDMNATRSEEQFHVINHAEQTLRKMENYLKEKQLCDVLLIAGHLRIPAHRLVLSAVSDYFAAMFTNDVLEAKQEEVRMEGVDPNALNSLVQYAYTGVLQLKEDTIESLLAAACLLQLTQVIDVCSNFLIKQLHPSNCLGIRSFGDAQGCTELLNVAHKYTMEHFIEVIKNQEFLLLPANEISKLLCSDDINVPDEETIFHALMQWVGHDVQNRQGELGMLLSYIRLPLLPPQLLADLETSSMFTGDLECQKLLMEAMKYHLLPERRSMMQSPRTKPRKSTVGALYAVGGMDAMKGTTTIEKYDLRTNSWLHIGTMNGRRLQFGVAVIDNKLYVVGGRDGLKTLNTVECFNPVGKIWTVMPPMSTHRHGLGVATLEGPMYAVGGHDGWSYLNTVERWDPEGRQWNYVASMSTPRSTVGVVALNNKLYAIGGRDGSSCLKSMEYFDPHTNKWSLCAPMSKRRGGVGVATYNGFLYVVGGHDAPASNHCSRLSDCVERYDPKGDSWSTVAPLSVPRDAVAVCPLGDKLYVVGGYDGHTYLNTVESYDAQRNEWKEEVPVNIGRAGACVVVVKLP.

The disordered stretch occupies residues 46–69; the sequence is TPVQGRLKSHSRDRNGLKKSNSPV. Positions 182 to 249 constitute a BTB domain; the sequence is CDVLLIAGHL…AYTGVLQLKE (68 aa). Kelch repeat units follow at residues 430–476, 477–523, 525–570, 571–617, 619–670, and 671–717; these read ALYA…VIDN, KLYV…TLEG, MYAV…ALNN, KLYA…TYNG, LYVV…PLGD, and KLYV…VVKL.

As to expression, expressed in adult fibroblasts and in a range of fetal tissues including tongue, palate, and mandible.

It is found in the cytoplasm. The protein localises to the cytoskeleton. The sequence is that of Kelch-like protein 4 (KLHL4) from Homo sapiens (Human).